The sequence spans 374 residues: Translocating chain-associated membrane protein 1 (374 aa).

The Cytoplasmic segment spans residues 1–29 (MAIRKKSSKNPPVLSHEFVLQNHADIVSC). The helical transmembrane segment at 30-50 (VAMVFLLGLMFEITAKVSIIF) threads the bilayer. At 51-81 (VTLQYNVTLPATEEQATESAFLYYYGIKDLA) the chain is on the lumenal side. Asparagine 56 is a glycosylation site (N-linked (GlcNAc...) asparagine). Residues 82 to 102 (TVFFYMLVAIIIHAIIQEYVL) form a helical membrane-spanning segment. The Cytoplasmic segment spans residues 103–121 (DKINRRMHFSKTKHSKFNE). A TLC domain is found at 117 to 326 (SKFNESGQLS…NFQLRRWREH (210 aa)). A helical membrane pass occupies residues 122 to 142 (SGQLSAFYLFSCIWGTFILIS). The Lumenal portion of the chain corresponds to 143–159 (ENYISDPTILWRAYPHN). The helical transmembrane segment at 160-180 (LMTFQMKFFYISQLAYWFHAF) threads the bilayer. Over 181–192 (PELYFQKTKKED) the chain is Cytoplasmic. The helical transmembrane segment at 193-213 (IPRQLVYIGLYLFHIAGAYLL) threads the bilayer. Asparagine 214 is a topological domain (lumenal). Residues 215-235 (LNHLGLVLLVLHYFVEFLFHI) traverse the membrane as a helical segment. Over 236–251 (SRLFYFSDEKYQKGFS) the chain is Cytoplasmic. A helical transmembrane segment spans residues 252–272 (LWAVLFVLGRLLTLILSVLTV). At 273-297 (GFGLARAENQKLDFSTGNFNVLAVR) the chain is on the lumenal side. Residues 298-318 (IAVLASICITQAFMMWKFINF) form a helical membrane-spanning segment. Over 319 to 374 (QLRRWREHSAFQAPAVKKKPPVTKGRSSRKGTENGVNGTVTSNGADSPRNRKEKSS) the chain is Cytoplasmic. Residues 331–374 (APAVKKKPPVTKGRSSRKGTENGVNGTVTSNGADSPRNRKEKSS) form a disordered region. Basic residues predominate over residues 334–347 (VKKKPPVTKGRSSR). Over residues 352–363 (NGVNGTVTSNGA) the composition is skewed to polar residues. The residue at position 365 (serine 365) is a Phosphoserine.

This sequence belongs to the TRAM family. In terms of assembly, interacts with SEC61B. May interact with Derlin-1/DERL1. N-glycosylated.

It localises to the endoplasmic reticulum membrane. Functionally, involved in the translocation of nascent protein chains into or through the endoplasmic reticulum (ER) membrane by facilitating the proper chain positioning at the SEC61 channel. Regulates the exposure of nascent secretory protein chain to the cytosol during translocation into the ER. May affect the phospholipid bilayer in the vicinity of the lateral gate of the SEC61 channel, thereby facilitating ER protein transport. Intimately associates with transmembrane (TM) domain of nascent membrane proteins during the entire integration process into the ER membrane. Associates with the second TM domain of G-protein-coupled receptor opsin/OPSD nascent chain in the ER membrane, which may facilitate its integration into the membrane. Under conditions of ER stress, participates in the disposal of misfolded ER membrane proteins during the unfolded protein response (UPR), an integrated stress response (ISR) pathway, by selectively retrotranslocating misfolded ER-membrane proteins from the ER into the cytosol where they are ubiquitinated and degraded by the proteasome. This Bos taurus (Bovine) protein is Translocating chain-associated membrane protein 1 (TRAM1).